The sequence spans 154 residues: Deoxyuridine 5'-triphosphate nucleotidohydrolase (154 aa).

Residues 68–70 (RSG), Asn81, and 85–87 (TID) each bind substrate.

This sequence belongs to the dUTPase family. The cofactor is Mg(2+).

The catalysed reaction is dUTP + H2O = dUMP + diphosphate + H(+). It functions in the pathway pyrimidine metabolism; dUMP biosynthesis; dUMP from dCTP (dUTP route): step 2/2. Functionally, this enzyme is involved in nucleotide metabolism: it produces dUMP, the immediate precursor of thymidine nucleotides and it decreases the intracellular concentration of dUTP so that uracil cannot be incorporated into DNA. The chain is Deoxyuridine 5'-triphosphate nucleotidohydrolase from Acidiphilium cryptum (strain JF-5).